Consider the following 338-residue polypeptide: Methionine import ATP-binding protein MetN 2 (338 aa).

One can recognise an ABC transporter domain in the interval 2–242 (IQLEGVSVDF…PQHAFTRQLV (241 aa)). 39–46 (GTSGAGKS) contributes to the ATP binding site.

Belongs to the ABC transporter superfamily. Methionine importer (TC 3.A.1.24) family. In terms of assembly, the complex is composed of two ATP-binding proteins (MetN), two transmembrane proteins (MetI) and a solute-binding protein (MetQ).

Its subcellular location is the cell inner membrane. It catalyses the reaction L-methionine(out) + ATP + H2O = L-methionine(in) + ADP + phosphate + H(+). It carries out the reaction D-methionine(out) + ATP + H2O = D-methionine(in) + ADP + phosphate + H(+). Its function is as follows. Part of the ABC transporter complex MetNIQ involved in methionine import. Responsible for energy coupling to the transport system. The chain is Methionine import ATP-binding protein MetN 2 from Pectobacterium atrosepticum (strain SCRI 1043 / ATCC BAA-672) (Erwinia carotovora subsp. atroseptica).